Reading from the N-terminus, the 302-residue chain is uncharacterized protein (302 aa).

3 disordered regions span residues 15 to 34 (RHST…RFHK), 143 to 195 (GMPL…PSHL), and 221 to 246 (GSEA…RESV). The segment covering 172 to 189 (HSDENKATGQGRENRDQP) has biased composition (basic and acidic residues).

This is an uncharacterized protein from Homo sapiens (Human).